The sequence spans 918 residues: Isoleucine--tRNA ligase (918 aa).

The 'HIGH' region signature appears at 57-67; the sequence is PYANGHIHIGH. Residue E564 coordinates L-isoleucyl-5'-AMP. Residues 605 to 609 carry the 'KMSKS' region motif; it reads KMSKS. Residue K608 participates in ATP binding. 4 residues coordinate Zn(2+): C888, C891, C903, and C906.

This sequence belongs to the class-I aminoacyl-tRNA synthetase family. IleS type 1 subfamily. As to quaternary structure, monomer. Zn(2+) serves as cofactor.

Its subcellular location is the cytoplasm. The enzyme catalyses tRNA(Ile) + L-isoleucine + ATP = L-isoleucyl-tRNA(Ile) + AMP + diphosphate. Its function is as follows. Catalyzes the attachment of isoleucine to tRNA(Ile). As IleRS can inadvertently accommodate and process structurally similar amino acids such as valine, to avoid such errors it has two additional distinct tRNA(Ile)-dependent editing activities. One activity is designated as 'pretransfer' editing and involves the hydrolysis of activated Val-AMP. The other activity is designated 'posttransfer' editing and involves deacylation of mischarged Val-tRNA(Ile). This Nitratiruptor sp. (strain SB155-2) protein is Isoleucine--tRNA ligase.